We begin with the raw amino-acid sequence, 167 residues long: Crossover junction endodeoxyribonuclease RuvC (167 aa).

Catalysis depends on residues Asp11, Glu71, and Asp143. Asp11, Glu71, and Asp143 together coordinate Mg(2+).

This sequence belongs to the RuvC family. As to quaternary structure, homodimer which binds Holliday junction (HJ) DNA. The HJ becomes 2-fold symmetrical on binding to RuvC with unstacked arms; it has a different conformation from HJ DNA in complex with RuvA. In the full resolvosome a probable DNA-RuvA(4)-RuvB(12)-RuvC(2) complex forms which resolves the HJ. The cofactor is Mg(2+).

Its subcellular location is the cytoplasm. The enzyme catalyses Endonucleolytic cleavage at a junction such as a reciprocal single-stranded crossover between two homologous DNA duplexes (Holliday junction).. Its function is as follows. The RuvA-RuvB-RuvC complex processes Holliday junction (HJ) DNA during genetic recombination and DNA repair. Endonuclease that resolves HJ intermediates. Cleaves cruciform DNA by making single-stranded nicks across the HJ at symmetrical positions within the homologous arms, yielding a 5'-phosphate and a 3'-hydroxyl group; requires a central core of homology in the junction. The consensus cleavage sequence is 5'-(A/T)TT(C/G)-3'. Cleavage occurs on the 3'-side of the TT dinucleotide at the point of strand exchange. HJ branch migration catalyzed by RuvA-RuvB allows RuvC to scan DNA until it finds its consensus sequence, where it cleaves and resolves the cruciform DNA. This Acidiphilium cryptum (strain JF-5) protein is Crossover junction endodeoxyribonuclease RuvC.